A 62-amino-acid chain; its full sequence is Sec-independent protein translocase protein TatA (62 aa).

Residues 1-21 traverse the membrane as a helical segment; that stretch reads MFGIGIPELLVIFVLILLVFG.

It belongs to the TatA/E family. The Tat system comprises two distinct complexes: a TatABC complex, containing multiple copies of TatA, TatB and TatC subunits, and a separate TatA complex, containing only TatA subunits. Substrates initially bind to the TatABC complex, which probably triggers association of the separate TatA complex to form the active translocon.

The protein localises to the cell inner membrane. In terms of biological role, part of the twin-arginine translocation (Tat) system that transports large folded proteins containing a characteristic twin-arginine motif in their signal peptide across membranes. TatA could form the protein-conducting channel of the Tat system. This Oleidesulfovibrio alaskensis (strain ATCC BAA-1058 / DSM 17464 / G20) (Desulfovibrio alaskensis) protein is Sec-independent protein translocase protein TatA.